Reading from the N-terminus, the 238-residue chain is SH2 domain-containing adapter protein F (238 aa).

2 disordered regions span residues Met-1–Trp-70 and Gly-85–Ser-121. Ser-39 carries the phosphoserine modification. Positions Glu-55–Gln-66 are enriched in acidic residues. At Tyr-64 the chain carries Phosphotyrosine. The 96-residue stretch at Trp-138 to Val-233 folds into the SH2 domain.

As to quaternary structure, interacts with phosphorylated 'Tyr-720' of PDGFRA via its SH2 domain. May become phosphorylated upon binding to PDGFRA.

In terms of biological role, adapter protein which may play a role in the regulation of apoptosis in response to PDGF. This chain is SH2 domain-containing adapter protein F, found in Mus musculus (Mouse).